The sequence spans 172 residues: EPIDERMAL PATTERNING FACTOR-like protein 7 (172 aa).

Residues 1 to 27 (MDHVNPTLFHLKSLSIFTLTLLYISSP) form the signal peptide. 4 disulfides stabilise this stretch: Cys-128-Cys-159, Cys-132-Cys-138, Cys-135-Cys-161, and Cys-147-Cys-153.

The protein belongs to the plant cysteine rich small secretory peptide family. Epidermal patterning factor subfamily.

The protein localises to the secreted. Its function is as follows. Controls stomatal patterning. The protein is EPIDERMAL PATTERNING FACTOR-like protein 7 of Arabidopsis thaliana (Mouse-ear cress).